Here is an 877-residue protein sequence, read N- to C-terminus: Probable alpha/beta-glucosidase agdC (877 aa).

The N-terminal stretch at 1–14 (MLGSLLLLAPLAGA) is a signal peptide. N-linked (GlcNAc...) asparagine glycosylation is found at N171, N293, and N373. The active-site Nucleophile is D422. E425 is an active-site residue. Residues 432-476 (DPCTDPERYSSENNLPPAPPPVRSSSPRPLPGFPADFQPSSASRS) form a disordered region. The span at 447–463 (PPAPPPVRSSSPRPLPG) shows a compositional bias: pro residues. An N-linked (GlcNAc...) asparagine glycan is attached at N508. The active-site Proton donor is D573. 3 N-linked (GlcNAc...) asparagine glycosylation sites follow: N574, N610, and N744.

It belongs to the glycosyl hydrolase 31 family.

It localises to the secreted. It carries out the reaction Hydrolysis of terminal, non-reducing (1-&gt;4)-linked alpha-D-glucose residues with release of alpha-D-glucose.. The catalysed reaction is Hydrolysis of terminal, non-reducing beta-D-glucosyl residues with release of beta-D-glucose.. Glucosidase involved in the degradation of cellulosic biomass. Has both alpha- and beta-glucosidase activity. This is Probable alpha/beta-glucosidase agdC (agdC) from Aspergillus oryzae (strain ATCC 42149 / RIB 40) (Yellow koji mold).